We begin with the raw amino-acid sequence, 265 residues long: Chanoclavine-I dehydrogenase easD (265 aa).

The signal sequence occupies residues 1–20; it reads MSFVSSKIFAITGGASGIGA. Isoleucine 18, aspartate 66, arginine 132, tyrosine 169, lysine 173, and threonine 205 together coordinate NADP(+). Tyrosine 169 functions as the Proton donor in the catalytic mechanism. Catalysis depends on lysine 173, which acts as the Lowers pKa of active site Tyr.

It belongs to the short-chain dehydrogenases/reductases (SDR) family. In terms of assembly, homotetramer.

The catalysed reaction is chanoclavine-I + NAD(+) = chanoclavine-I aldehyde + NADH + H(+). It functions in the pathway alkaloid biosynthesis; ergot alkaloid biosynthesis. Chanoclavine-I dehydrogenase; part of the gene cluster that mediates the biosynthesis of fungal ergot alkaloid. DmaW catalyzes the first step of ergot alkaloid biosynthesis by condensing dimethylallyl diphosphate (DMAP) and tryptophan to form 4-dimethylallyl-L-tryptophan. The second step is catalyzed by the methyltransferase easF that methylates 4-dimethylallyl-L-tryptophan in the presence of S-adenosyl-L-methionine, resulting in the formation of 4-dimethylallyl-L-abrine. The catalase easC and the FAD-dependent oxidoreductase easE then transform 4-dimethylallyl-L-abrine to chanoclavine-I which is further oxidized by easD in the presence of NAD(+), resulting in the formation of chanoclavine-I aldehyde. Chanoclavine-I aldehyde is the precursor of ergoamides and ergopeptines in Clavicipitaceae, and clavine-type alcaloids such as fumiclavine in Trichocomaceae. However, the metabolites downstream of chanoclavine-I aldehyde in Arthrodermataceae have not been identified yet. The chain is Chanoclavine-I dehydrogenase easD from Trichophyton verrucosum (strain HKI 0517).